Here is a 702-residue protein sequence, read N- to C-terminus: Neurochondrin (702 aa).

Belongs to the neurochondrin family.

Its subcellular location is the cytoplasm. The protein localises to the cytosol. It is found in the cell projection. It localises to the dendrite. The protein resides in the postsynapse. In terms of biological role, probably involved in signal transduction, in the nervous system. Required for the spatial learning process. May also be involved in neurite outgrowth. The chain is Neurochondrin (NCDN) from Gallus gallus (Chicken).